Here is a 418-residue protein sequence, read N- to C-terminus: Cell division protein FtsA (418 aa).

The protein belongs to the FtsA/MreB family. In terms of assembly, self-interacts. Interacts with FtsZ.

It is found in the cell inner membrane. Cell division protein that is involved in the assembly of the Z ring. May serve as a membrane anchor for the Z ring. This is Cell division protein FtsA from Buchnera aphidicola subsp. Acyrthosiphon pisum (strain APS) (Acyrthosiphon pisum symbiotic bacterium).